We begin with the raw amino-acid sequence, 673 residues long: Cyclic nucleotide-binding domain-containing protein 2 (673 aa).

A compositionally biased stretch (polar residues) spans 1 to 15 (MNRSANPEAASSTSH). The segment at 1–89 (MNRSANPEAA…PQPKDRPGVQ (89 aa)) is disordered. Over residues 43 to 86 (PADKSDTTESKSESGSDSRSEEDKESPASIKEIKAETPQPKDRP) the composition is skewed to basic and acidic residues. An a nucleoside 3',5'-cyclic phosphate-binding site is contributed by 206–329 (CYRSYTESLQ…ETQYRYNFFR (124 aa)).

Testis-specific. Exclusively expressed in testicular germ cells while it is not present in mature sperm (at protein level).

Its subcellular location is the cytoplasm. The protein resides in the cytosol. Functionally, essential for male fertility. Plays an important role in spermatogenesis and regulates sperm motility by controlling the development of the flagellar bending of sperm. The sequence is that of Cyclic nucleotide-binding domain-containing protein 2 (Cnbd2) from Mus musculus (Mouse).